The sequence spans 728 residues: 1,4-alpha-glucan branching enzyme GlgB (728 aa).

The active-site Nucleophile is Asp-409. Catalysis depends on Glu-462, which acts as the Proton donor.

This sequence belongs to the glycosyl hydrolase 13 family. GlgB subfamily. In terms of assembly, monomer.

It carries out the reaction Transfers a segment of a (1-&gt;4)-alpha-D-glucan chain to a primary hydroxy group in a similar glucan chain.. Its pathway is glycan biosynthesis; glycogen biosynthesis. Its function is as follows. Catalyzes the formation of the alpha-1,6-glucosidic linkages in glycogen by scission of a 1,4-alpha-linked oligosaccharide from growing alpha-1,4-glucan chains and the subsequent attachment of the oligosaccharide to the alpha-1,6 position. This Cereibacter sphaeroides (strain ATCC 17023 / DSM 158 / JCM 6121 / CCUG 31486 / LMG 2827 / NBRC 12203 / NCIMB 8253 / ATH 2.4.1.) (Rhodobacter sphaeroides) protein is 1,4-alpha-glucan branching enzyme GlgB.